The primary structure comprises 633 residues: Chaperone protein HtpG (633 aa).

The segment at 1-341 is a; substrate-binding; sequence MTAPHETMSF…SADLPLNVSR (341 aa). The b stretch occupies residues 342-562; that stretch reads ELLQESRDVK…EGDMSGYLQR (221 aa). Residues 563–633 are c; it reads LLKQAGQKAP…YVQRVNKLLA (71 aa).

This sequence belongs to the heat shock protein 90 family. In terms of assembly, homodimer.

Its subcellular location is the cytoplasm. Functionally, molecular chaperone. Has ATPase activity. This chain is Chaperone protein HtpG, found in Cupriavidus taiwanensis (strain DSM 17343 / BCRC 17206 / CCUG 44338 / CIP 107171 / LMG 19424 / R1) (Ralstonia taiwanensis (strain LMG 19424)).